The chain runs to 310 residues: Aspartate carbamoyltransferase catalytic subunit (310 aa).

R58 and T59 together coordinate carbamoyl phosphate. L-aspartate is bound at residue K87. R108, H136, and Q139 together coordinate carbamoyl phosphate. L-aspartate-binding residues include R169 and R229. L268 and P269 together coordinate carbamoyl phosphate.

It belongs to the aspartate/ornithine carbamoyltransferase superfamily. ATCase family. As to quaternary structure, heterododecamer (2C3:3R2) of six catalytic PyrB chains organized as two trimers (C3), and six regulatory PyrI chains organized as three dimers (R2).

It carries out the reaction carbamoyl phosphate + L-aspartate = N-carbamoyl-L-aspartate + phosphate + H(+). It participates in pyrimidine metabolism; UMP biosynthesis via de novo pathway; (S)-dihydroorotate from bicarbonate: step 2/3. In terms of biological role, catalyzes the condensation of carbamoyl phosphate and aspartate to form carbamoyl aspartate and inorganic phosphate, the committed step in the de novo pyrimidine nucleotide biosynthesis pathway. The polypeptide is Aspartate carbamoyltransferase catalytic subunit (Leptospira biflexa serovar Patoc (strain Patoc 1 / Ames)).